The primary structure comprises 700 residues: Transketolase (700 aa).

A substrate-binding site is contributed by His-45. Thiamine diphosphate contacts are provided by residues Thr-48, His-85, and 133 to 135; that span reads GPL. Residue Asp-177 coordinates Mg(2+). Residues Gly-178 and Asn-207 each contribute to the thiamine diphosphate site. Positions 207 and 209 each coordinate Mg(2+). His-283, Arg-378, and Ser-405 together coordinate substrate. Thiamine diphosphate is bound at residue His-283. The Proton donor role is filled by Glu-441. Phe-467 provides a ligand contact to thiamine diphosphate. His-491, Asp-499, and Arg-552 together coordinate substrate.

This sequence belongs to the transketolase family. Homodimer. Requires Mg(2+) as cofactor. The cofactor is Ca(2+). Mn(2+) is required as a cofactor. It depends on Co(2+) as a cofactor. Thiamine diphosphate serves as cofactor.

It carries out the reaction D-sedoheptulose 7-phosphate + D-glyceraldehyde 3-phosphate = aldehydo-D-ribose 5-phosphate + D-xylulose 5-phosphate. Catalyzes the transfer of a two-carbon ketol group from a ketose donor to an aldose acceptor, via a covalent intermediate with the cofactor thiamine pyrophosphate. The sequence is that of Transketolase (tkt) from Mycobacterium bovis (strain ATCC BAA-935 / AF2122/97).